A 135-amino-acid polypeptide reads, in one-letter code: C-type natriuretic peptide (135 aa).

The signal sequence occupies residues 1 to 25 (MSGHTSFYCGLLLLLLIQVQARPRA). Positions 26-113 (DDSLQVLSRL…PLRFKGRSKK (88 aa)) are excised as a propeptide. Residues 46–67 (EELNNEAQEISPAASLPDLNTD) are disordered. An intrachain disulfide couples C119 to C135.

Belongs to the natriuretic peptide family.

It is found in the secreted. In terms of biological role, hormone which may be vasoactive and natriuretic. Has a cGMP-stimulating activity. This Squalus acanthias (Spiny dogfish) protein is C-type natriuretic peptide.